The primary structure comprises 194 residues: Heme transporter hrg-1 (194 aa).

Transmembrane regions (helical) follow at residues 45–65 (QIWI…VFAI), 71–91 (IAVT…HLHL), 113–133 (GATV…VAGI), and 143–163 (LMGA…KWSA). Positions 182–183 (LL) match the Di-leucine motif motif.

It belongs to the HRG family. As to expression, specifically expressed in the intestinal cells in larvae and adults.

Its subcellular location is the endosome membrane. It localises to the lysosome membrane. Functionally, heme transporter that regulates intracellular heme availability through the endosomal or lysosomal compartment. In Caenorhabditis elegans, this protein is Heme transporter hrg-1 (hrg-1).